Reading from the N-terminus, the 669-residue chain is NAD-dependent malic enzyme, mitochondrial (669 aa).

Polar residues predominate over residues 33–43; that stretch reads IQQSRLYSSNT. A disordered region spans residues 33–68; the sequence is IQQSRLYSSNTRSHKATTTRENTFQKPYSDEEVTKT. Residue Arg-142 coordinates fumarate. Tyr-187 (proton donor) is an active-site residue. The Proton acceptor role is filled by Lys-259. Residues Glu-330, Asp-331, and Asp-354 each coordinate a divalent metal cation. Positions 387 and 390 each coordinate NAD(+). Asn-499 and Asn-539 together coordinate (S)-malate.

Belongs to the malic enzymes family. Mg(2+) is required as a cofactor. It depends on Mn(2+) as a cofactor.

Its subcellular location is the mitochondrion matrix. It catalyses the reaction (S)-malate + NAD(+) = pyruvate + CO2 + NADH. The enzyme catalyses oxaloacetate + H(+) = pyruvate + CO2. NAD-dependent mitochondrial malic enzyme that catalyzes the oxidative decarboxylation of malate to pyruvate. This is NAD-dependent malic enzyme, mitochondrial (MAE1) from Saccharomyces cerevisiae (strain ATCC 204508 / S288c) (Baker's yeast).